The chain runs to 147 residues: Nucleoside diphosphate kinase (147 aa).

6 residues coordinate ATP: Lys11, Phe59, Arg87, Thr93, Arg104, and Asn114. The active-site Pros-phosphohistidine intermediate is His117.

It belongs to the NDK family. As to quaternary structure, homotetramer. Requires Mg(2+) as cofactor.

The protein resides in the cytoplasm. It catalyses the reaction a 2'-deoxyribonucleoside 5'-diphosphate + ATP = a 2'-deoxyribonucleoside 5'-triphosphate + ADP. The enzyme catalyses a ribonucleoside 5'-diphosphate + ATP = a ribonucleoside 5'-triphosphate + ADP. Its function is as follows. Major role in the synthesis of nucleoside triphosphates other than ATP. The ATP gamma phosphate is transferred to the NDP beta phosphate via a ping-pong mechanism, using a phosphorylated active-site intermediate. The polypeptide is Nucleoside diphosphate kinase (Anaeromyxobacter sp. (strain K)).